A 33-amino-acid polypeptide reads, in one-letter code: uncharacterized protein (33 aa).

Residues 1 to 33 (MGSVIKKRRKRMSKKKHRKLLRRTRVQRRKLGK) form a disordered region.

This is an uncharacterized protein from Mycobacterium tuberculosis (strain CDC 1551 / Oshkosh).